The chain runs to 202 residues: Glycerol-3-phosphate acyltransferase (202 aa).

A run of 5 helical transmembrane segments spans residues 3–23 (NLII…LILA), 87–107 (LLWS…YLLF), 118–138 (GAMI…WVVI), 144–164 (ISSL…FIFN), and 167–187 (LEIH…YKHL).

Belongs to the PlsY family. Probably interacts with PlsX.

It localises to the cell inner membrane. It carries out the reaction an acyl phosphate + sn-glycerol 3-phosphate = a 1-acyl-sn-glycero-3-phosphate + phosphate. It functions in the pathway lipid metabolism; phospholipid metabolism. Its function is as follows. Catalyzes the transfer of an acyl group from acyl-phosphate (acyl-PO(4)) to glycerol-3-phosphate (G3P) to form lysophosphatidic acid (LPA). This enzyme utilizes acyl-phosphate as fatty acyl donor, but not acyl-CoA or acyl-ACP. This chain is Glycerol-3-phosphate acyltransferase, found in Campylobacter jejuni subsp. jejuni serotype O:2 (strain ATCC 700819 / NCTC 11168).